Here is a 264-residue protein sequence, read N- to C-terminus: 3-methyl-2-oxobutanoate hydroxymethyltransferase (264 aa).

2 residues coordinate Mg(2+): Asp-42 and Asp-81. 3-methyl-2-oxobutanoate-binding positions include 42–43, Asp-81, and Lys-110; that span reads DS. Glu-112 serves as a coordination point for Mg(2+). Residue Glu-179 is the Proton acceptor of the active site.

It belongs to the PanB family. Homodecamer; pentamer of dimers. The cofactor is Mg(2+).

It localises to the cytoplasm. It carries out the reaction 3-methyl-2-oxobutanoate + (6R)-5,10-methylene-5,6,7,8-tetrahydrofolate + H2O = 2-dehydropantoate + (6S)-5,6,7,8-tetrahydrofolate. The protein operates within cofactor biosynthesis; (R)-pantothenate biosynthesis; (R)-pantoate from 3-methyl-2-oxobutanoate: step 1/2. Its function is as follows. Catalyzes the reversible reaction in which hydroxymethyl group from 5,10-methylenetetrahydrofolate is transferred onto alpha-ketoisovalerate to form ketopantoate. The chain is 3-methyl-2-oxobutanoate hydroxymethyltransferase from Francisella tularensis subsp. tularensis (strain FSC 198).